A 265-amino-acid polypeptide reads, in one-letter code: Glutamate racemase (265 aa).

Residues Asp-7–Ser-8 and Tyr-39–Gly-40 contribute to the substrate site. Cys-71 serves as the catalytic Proton donor/acceptor. Residue Asn-72–Thr-73 participates in substrate binding. Catalysis depends on Cys-184, which acts as the Proton donor/acceptor. Thr-185–His-186 contacts substrate.

This sequence belongs to the aspartate/glutamate racemases family.

It carries out the reaction L-glutamate = D-glutamate. It participates in cell wall biogenesis; peptidoglycan biosynthesis. Functionally, provides the (R)-glutamate required for cell wall biosynthesis. This is Glutamate racemase from Sulfurovum sp. (strain NBC37-1).